A 467-amino-acid chain; its full sequence is GTPase Obg (467 aa).

An Obg domain is found at 1 to 158 (MFYDEAKIFV…RWLRLELKLL (158 aa)). Positions 159–333 (ADVGLVGLPN…LIRATWERLQ (175 aa)) constitute an OBG-type G domain. GTP contacts are provided by residues 165-172 (GLPNAGKS), 190-194 (FTTLE), 214-217 (DLPG), 285-288 (NKMD), and 314-316 (SAA). Serine 172 and threonine 192 together coordinate Mg(2+). Residues 352-430 (TLDRSQERWE…VAGRELVWEP (79 aa)) enclose the OCT domain.

Belongs to the TRAFAC class OBG-HflX-like GTPase superfamily. OBG GTPase family. As to quaternary structure, monomer. Requires Mg(2+) as cofactor.

The protein resides in the cytoplasm. Functionally, an essential GTPase which binds GTP, GDP and possibly (p)ppGpp with moderate affinity, with high nucleotide exchange rates and a fairly low GTP hydrolysis rate. Plays a role in control of the cell cycle, stress response, ribosome biogenesis and in those bacteria that undergo differentiation, in morphogenesis control. This chain is GTPase Obg, found in Thermomicrobium roseum (strain ATCC 27502 / DSM 5159 / P-2).